The chain runs to 198 residues: MIEFVYPHTQLVAGVDEVGRGPLVGAVVTAAVILDPARPIAGLNDSKKLSEKRRLALCEEIKEKALSWSLGRAEPHEIDELNILHATMLAMQRAVAGLHIAPEYVLIDGNRCPKLPMPAMAVVKGDSRVPEISAASILAKVTRDAEMAALDIVFPQYGFAQHKGYPTAFHLEKLAEHGATEHHRRSFGPVKRALGLAS.

The RNase H type-2 domain maps to 10–198 (QLVAGVDEVG…PVKRALGLAS (189 aa)). Residues aspartate 16, glutamate 17, and aspartate 108 each coordinate a divalent metal cation.

This sequence belongs to the RNase HII family. The cofactor is Mn(2+). Requires Mg(2+) as cofactor.

It is found in the cytoplasm. It catalyses the reaction Endonucleolytic cleavage to 5'-phosphomonoester.. Endonuclease that specifically degrades the RNA of RNA-DNA hybrids. This Shigella boydii serotype 18 (strain CDC 3083-94 / BS512) protein is Ribonuclease HII.